The following is a 37-amino-acid chain: Large ribosomal subunit protein bL36 (37 aa).

The protein belongs to the bacterial ribosomal protein bL36 family.

The polypeptide is Large ribosomal subunit protein bL36 (Aquifex aeolicus (strain VF5)).